A 756-amino-acid chain; its full sequence is Disintegrin and metalloproteinase domain-containing protein 5 (756 aa).

A signal peptide spans 1 to 16 (MFLLLVLLTGLGGMHA). A propeptide spanning residues 17 to 142 (DLNPHKTFLQ…AVSGFIHKIY (126 aa)) is cleaved from the precursor. The Extracellular portion of the chain corresponds to 17-698 (DLNPHKTFLQ…GRHAPFQKQR (682 aa)). Positions 183-380 (RYIEMHIVVD…NGLTCLQTNP (198 aa)) constitute a Peptidase M12B domain. Cystine bridges form between Cys292–Cys375, Cys334–Cys359, Cys336–Cys341, and Cys449–Cys470. The Disintegrin domain occupies 389-478 (RRICGNGLLE…YCLLDTYVRD (90 aa)). A glycan (N-linked (GlcNAc...) asparagine) is linked at Asn559. Residues 630–664 (DFETCEASIECSGHGICNNFNHCHCEKGYNPPHCK) enclose the EGF-like domain. 3 disulfide bridges follow: Cys634-Cys646, Cys640-Cys652, and Cys654-Cys663. The chain crosses the membrane as a helical span at residues 699–719 (FQLIFYISLPVLIITTAILIK). Topologically, residues 720 to 756 (RKKLRELCYRGETESESSVSQESSSNSKSSLSESTSL) are cytoplasmic. Residues 731-756 (ETESESSVSQESSSNSKSSLSESTSL) form a disordered region. The segment covering 735–756 (ESSVSQESSSNSKSSLSESTSL) has biased composition (low complexity).

Interacts with TEX101. In terms of processing, subject to proteolytic processing during epididymal transit of spermatozoa. In terms of tissue distribution, detected in testis (at protein level). Detected in adult and prepubertal testis. Detected at very low levels in heart, kidney, brain, muscle ovary and uterus.

The protein resides in the membrane. This is a non catalytic metalloprotease-like protein. May play a role in sperm-egg fusion. The chain is Disintegrin and metalloproteinase domain-containing protein 5 (ADAM5) from Macaca fascicularis (Crab-eating macaque).